A 780-amino-acid polypeptide reads, in one-letter code: Protein phosphatase 1 regulatory subunit 21 (780 aa).

Coiled coils occupy residues Met-1–Glu-209 and Glu-556–Arg-605. Residues Glu-84–Gln-104 are disordered. Over residues Glu-95 to Gln-104 the composition is skewed to low complexity. The residue at position 652 (Thr-652) is a Phosphothreonine. Positions Ala-694–Leu-742 form a coiled coil.

Component of the FERRY complex, composed of five subunits: TBCK, PPP1R21, FERRY3, CRYZL1 and GATAD1, with a ratio of 1:2:1:2:4 respectively. PPP1R21 serves as a binding hub connecting all five complex subunits to mediate the binding to specific mitochondrial mRNAs. Interacts with the GTP-bound form of RAB5A (via its C-terminal region); linking the mRNP complex onto trafficking endosomes for active mRNA transport. Interacts with PPP1CA. In terms of tissue distribution, expressed at 16 dpc in the cortex (at protein level).

Its subcellular location is the early endosome. Its function is as follows. Component of the FERRY complex (Five-subunit Endosomal Rab5 and RNA/ribosome intermediary). The FERRY complex directly interacts with mRNAs and RAB5A, and functions as a RAB5A effector involved in the localization and the distribution of specific mRNAs most likely by mediating their endosomal transport. The complex recruits mRNAs and ribosomes to early endosomes through direct mRNA-interaction. In the complex, PPP1R21 serves as a binding hub connecting all five complex subunits and mediating the binding to mRNA and early endosomes via RAB5A. Putative regulator of protein phosphatase 1 (PP1) activity. May play a role in the endosomal sorting process or in endosome maturation pathway. The sequence is that of Protein phosphatase 1 regulatory subunit 21 (Ppp1r21) from Mus musculus (Mouse).